The chain runs to 399 residues: Adenylate cyclase (399 aa).

The span at 1–10 shows a compositional bias: polar residues; the sequence is MTVGDTTSGS. Residues 1-35 are disordered; the sequence is MTVGDTTSGSGEEPAADSSVHATPHHEVDHTVEPT. Residues 24 to 33 are compositionally biased toward basic and acidic residues; that stretch reads PHHEVDHTVE. The region spanning 198-307 is the Guanylate cyclase domain; sequence RVRFADLVGF…TTVNLASRLT (110 aa). Positions 203 and 247 each coordinate Mg(2+).

This sequence belongs to the adenylyl cyclase class-3 family. Mg(2+) is required as a cofactor.

It catalyses the reaction ATP = 3',5'-cyclic AMP + diphosphate. This Streptomyces griseus protein is Adenylate cyclase (cya).